The chain runs to 111 residues: Large ribosomal subunit protein uL24 (111 aa).

This sequence belongs to the universal ribosomal protein uL24 family. As to quaternary structure, part of the 50S ribosomal subunit.

Functionally, one of two assembly initiator proteins, it binds directly to the 5'-end of the 23S rRNA, where it nucleates assembly of the 50S subunit. One of the proteins that surrounds the polypeptide exit tunnel on the outside of the subunit. The chain is Large ribosomal subunit protein uL24 from Chlamydia muridarum (strain MoPn / Nigg).